Reading from the N-terminus, the 388-residue chain is Palmitoyltransferase ZDHHC18 (388 aa).

Residues 1 to 67 (MKDCEYQQIS…GSGSLGRRPR (67 aa)) form a disordered region. The Cytoplasmic segment spans residues 1–90 (MKDCEYQQIS…CGGRLMLAGH (90 aa)). Over residues 10–27 (SPGAAPLPASPGARRPGP) the composition is skewed to low complexity. The residue at position 19 (S19) is a Phosphoserine. The segment covering 28–46 (AASPTPGPGPAPPAAPAPP) has biased composition (pro residues). The helical transmembrane segment at 91-111 (GGVFALTLLLILTTTGLFFVF) threads the bilayer. Residues 112–119 (DCPYLARK) are Lumenal-facing. Residues 120–140 (LTLAIPIIAAILFFFVMSCLL) form a helical membrane-spanning segment. At 141–235 (QTSFTDPGIL…GNCVGRRNYR (95 aa)) the chain is on the cytoplasmic side. The DHHC domain occupies 192-242 (KYCFTCKMFRPPRTSHCSVCDNCVERFDHHCPWVGNCVGRRNYRFFYAFIL). C222 acts as the S-palmitoyl cysteine intermediate in catalysis. Residues 236–256 (FFYAFILSLSFLTAFIFACVV) form a helical membrane-spanning segment. The Lumenal portion of the chain corresponds to 257–277 (THLTLRAQGSNFLSTLKETPA). A helical transmembrane segment spans residues 278 to 298 (SVLELVICFFSIWSILGLSGF). Residues 299 to 388 (HTYLVASNLT…PDASMVGGHP (90 aa)) are Cytoplasmic-facing. The segment at 364 to 388 (LPSPIRSDEPACRAKPDASMVGGHP) is disordered. A compositionally biased stretch (basic and acidic residues) spans 369–379 (RSDEPACRAKP).

The protein belongs to the DHHC palmitoyltransferase family. ERF2/ZDHHC9 subfamily. As to expression, widely expressed.

Its subcellular location is the golgi apparatus membrane. It carries out the reaction L-cysteinyl-[protein] + hexadecanoyl-CoA = S-hexadecanoyl-L-cysteinyl-[protein] + CoA. Its function is as follows. Palmitoyltransferase that catalyzes the addition of palmitate onto various protein substrates, such as CGAS, HRAS and LCK. Acts as a negative regulator of the cGAS-STING pathway be mediating palmitoylation and inactivation of CGAS. May also have a palmitoyltransferase activity toward the beta-2 adrenergic receptor/ADRB2 and therefore regulate G protein-coupled receptor signaling. In Homo sapiens (Human), this protein is Palmitoyltransferase ZDHHC18.